Reading from the N-terminus, the 711-residue chain is Polyribonucleotide nucleotidyltransferase (711 aa).

Positions 486 and 492 each coordinate Mg(2+). The region spanning 553 to 612 (PRIHTIKINPDKIKDVIGKGGSVIRALTEETGTTIEIEDDGTVKIAATDGEKAKHAIRRI) is the KH domain. The S1 motif domain occupies 622–690 (GRVYTGKVTR…RQGRIRLSIK (69 aa)). Residues 689–711 (IKEATEQSQPAAAPEAPAAEQGE) are disordered. Residues 694-711 (EQSQPAAAPEAPAAEQGE) show a composition bias toward low complexity.

This sequence belongs to the polyribonucleotide nucleotidyltransferase family. In terms of assembly, component of the RNA degradosome, which is a multiprotein complex involved in RNA processing and mRNA degradation. Mg(2+) serves as cofactor.

It localises to the cytoplasm. The enzyme catalyses RNA(n+1) + phosphate = RNA(n) + a ribonucleoside 5'-diphosphate. In terms of biological role, involved in mRNA degradation. Catalyzes the phosphorolysis of single-stranded polyribonucleotides processively in the 3'- to 5'-direction. The polypeptide is Polyribonucleotide nucleotidyltransferase (Shigella boydii serotype 4 (strain Sb227)).